The primary structure comprises 77 residues: Cell division topological specificity factor (77 aa).

The protein belongs to the MinE family.

Functionally, prevents the cell division inhibition by proteins MinC and MinD at internal division sites while permitting inhibition at polar sites. This ensures cell division at the proper site by restricting the formation of a division septum at the midpoint of the long axis of the cell. The protein is Cell division topological specificity factor of Nautilia profundicola (strain ATCC BAA-1463 / DSM 18972 / AmH).